We begin with the raw amino-acid sequence, 248 residues long: Chitin deacetylase (248 aa).

The signal sequence occupies residues 1–26 (MHFSTLFGAAATAALAGSTNASPLAR). Intrachain disulfides connect C38–C237 and C148–C152. The NodB homology domain maps to 42–232 (GLVALTYDDG…TLKSKGYRAV (191 aa)). D49 acts as the Proton acceptor in catalysis. Position 49 (D49) interacts with acetate. Co(2+) contacts are provided by D50, H104, and H108. Y145 is an acetate binding site. The active-site Proton donor is the H206.

The protein belongs to the polysaccharide deacetylase family. In terms of assembly, monomer. It depends on Co(2+) as a cofactor. Post-translationally, N-glycosylated.

It localises to the secreted. The catalysed reaction is [(1-&gt;4)-N-acetyl-beta-D-glucosaminyl](n) + n H2O = chitosan + n acetate. Hydrolyzes the N-acetamido groups of N-acetyl-D-glucosamine polymers in chitin to form chitosan and acetate. May play a role in evasion of the host immune response; plant chitinases liberate chitin molecules from the fungal cell wall which act as elicitors of the plant immune response, deacetylation of the liberated chitin neutralizes elicitor activity. The chain is Chitin deacetylase from Colletotrichum lindemuthianum (Bean anthracnose fungus).